A 354-amino-acid chain; its full sequence is NADH-quinone oxidoreductase subunit H (354 aa).

The next 8 membrane-spanning stretches (helical) occupy residues 16–36 (WLAVLITLVLQAVAVILPVMI), 90–110 (YLFIIAPILALAPAVAAWAVI), 126–146 (VLYVLAVASIGVYGIVISGWA), 170–190 (MGFALVTVLMVADTMNLTGIV), 197–217 (IWNWYWIPLLPMFFVYFISGL), 249–269 (VFFLAEYAMMILISFMTAIMF), 290–310 (VPGFVWLFAKVAFLLFLFLWF), and 329–349 (VLIPVTIVWVFVVGVMEYFKV).

It belongs to the complex I subunit 1 family. NDH-1 is composed of 14 different subunits. Subunits NuoA, H, J, K, L, M, N constitute the membrane sector of the complex.

The protein localises to the cell inner membrane. The enzyme catalyses a quinone + NADH + 5 H(+)(in) = a quinol + NAD(+) + 4 H(+)(out). In terms of biological role, NDH-1 shuttles electrons from NADH, via FMN and iron-sulfur (Fe-S) centers, to quinones in the respiratory chain. The immediate electron acceptor for the enzyme in this species is believed to be ubiquinone. Couples the redox reaction to proton translocation (for every two electrons transferred, four hydrogen ions are translocated across the cytoplasmic membrane), and thus conserves the redox energy in a proton gradient. This subunit may bind ubiquinone. This is NADH-quinone oxidoreductase subunit H from Hydrogenovibrio crunogenus (strain DSM 25203 / XCL-2) (Thiomicrospira crunogena).